A 79-amino-acid polypeptide reads, in one-letter code: Small ribosomal subunit protein bS20 (79 aa).

This sequence belongs to the bacterial ribosomal protein bS20 family.

Functionally, binds directly to 16S ribosomal RNA. This Karelsulcia muelleri (strain GWSS) (Sulcia muelleri) protein is Small ribosomal subunit protein bS20.